The chain runs to 284 residues: Parvulin-like PPIase (284 aa).

The N-terminal stretch at 1 to 20 (MKKLSIVLLSVSMLSSIAFA) is a signal peptide. Residues 139-232 (KEQIKVAHIL…YGWHIIKVLE (94 aa)) enclose the PpiC domain.

This sequence belongs to the PpiC/parvulin rotamase family.

It is found in the cell outer membrane. The enzyme catalyses [protein]-peptidylproline (omega=180) = [protein]-peptidylproline (omega=0). This Rickettsia bellii (strain RML369-C) protein is Parvulin-like PPIase (plp).